Consider the following 118-residue polypeptide: DNA-binding protein SSO0352 (118 aa).

Belongs to the PDCD5 family.

In Saccharolobus solfataricus (strain ATCC 35092 / DSM 1617 / JCM 11322 / P2) (Sulfolobus solfataricus), this protein is DNA-binding protein SSO0352.